Reading from the N-terminus, the 484-residue chain is Aldehyde dehydrogenase family 3 member H1 (484 aa).

196–201 (GSSKIG) serves as a coordination point for NAD(+). The active-site Proton acceptor is glutamate 218. Cysteine 253 functions as the Nucleophile in the catalytic mechanism.

This sequence belongs to the aldehyde dehydrogenase family. In terms of assembly, homodimer and homomultimer. Isoform alpha is expressed in expanded leaves and flowers. Detected in seedlings. Isoform beta is mainly expressed in flowers. Detected in leaves and seedlings.

It catalyses the reaction an aldehyde + NAD(+) + H2O = a carboxylate + NADH + 2 H(+). With respect to regulation, thiol-based regulation. Inactivation after dimerization under oxidizing conditions. Its function is as follows. Involved in oxidative stress tolerance by detoxifying reactive aldehydes derived from lipid peroxidation. Medium- to long-chain saturated aldehydes are preferred substrates, while the short-chain aldehyde propanal is a weak substrate. Is strictely NAD(+) specific. The protein is Aldehyde dehydrogenase family 3 member H1 (ALDH3H1) of Arabidopsis thaliana (Mouse-ear cress).